A 126-amino-acid chain; its full sequence is Holo-[acyl-carrier-protein] synthase (126 aa).

Mg(2+) is bound by residues D8 and E57.

Belongs to the P-Pant transferase superfamily. AcpS family. It depends on Mg(2+) as a cofactor.

The protein localises to the cytoplasm. The catalysed reaction is apo-[ACP] + CoA = holo-[ACP] + adenosine 3',5'-bisphosphate + H(+). In terms of biological role, transfers the 4'-phosphopantetheine moiety from coenzyme A to a Ser of acyl-carrier-protein. In Geobacter metallireducens (strain ATCC 53774 / DSM 7210 / GS-15), this protein is Holo-[acyl-carrier-protein] synthase.